Consider the following 435-residue polypeptide: Putative FBD-associated F-box protein At5g56820 (435 aa).

Residues 14-60 form the F-box domain; sequence SDRISYLPDDLLLRILSFIHTSDAISTSLLSKRWKFVWKMMPTLDLD. An FBD domain is found at 341 to 390; it reads VRKPNSVPECLTFHLETLEWQGYAGRPEDKEIAVYILGNALRLNTATISR.

This is Putative FBD-associated F-box protein At5g56820 from Arabidopsis thaliana (Mouse-ear cress).